The following is a 450-amino-acid chain: Bifunctional protein GlmU (450 aa).

A pyrophosphorylase region spans residues 1–229 (MGVALIVLAA…EAETLGINTR (229 aa)). Residues 8 to 11 (LAAG), K22, Q75, 80 to 81 (GT), 103 to 105 (YGD), G141, E155, N170, and N227 contribute to the UDP-N-acetyl-alpha-D-glucosamine site. D105 is a Mg(2+) binding site. Mg(2+) is bound at residue N227. Residues 230–250 (TELAAAEQAFQARARARALED) are linker. The N-acetyltransferase stretch occupies residues 251 to 450 (GVTLADPATT…RARKSAKGAQ (200 aa)). The UDP-N-acetyl-alpha-D-glucosamine site is built by R316 and K334. H346 functions as the Proton acceptor in the catalytic mechanism. UDP-N-acetyl-alpha-D-glucosamine contacts are provided by Y349 and N360. Residues A363, 369–370 (NY), S388, T406, and R423 contribute to the acetyl-CoA site.

It in the N-terminal section; belongs to the N-acetylglucosamine-1-phosphate uridyltransferase family. This sequence in the C-terminal section; belongs to the transferase hexapeptide repeat family. Homotrimer. The cofactor is Mg(2+).

The protein resides in the cytoplasm. The enzyme catalyses alpha-D-glucosamine 1-phosphate + acetyl-CoA = N-acetyl-alpha-D-glucosamine 1-phosphate + CoA + H(+). It carries out the reaction N-acetyl-alpha-D-glucosamine 1-phosphate + UTP + H(+) = UDP-N-acetyl-alpha-D-glucosamine + diphosphate. It functions in the pathway nucleotide-sugar biosynthesis; UDP-N-acetyl-alpha-D-glucosamine biosynthesis; N-acetyl-alpha-D-glucosamine 1-phosphate from alpha-D-glucosamine 6-phosphate (route II): step 2/2. It participates in nucleotide-sugar biosynthesis; UDP-N-acetyl-alpha-D-glucosamine biosynthesis; UDP-N-acetyl-alpha-D-glucosamine from N-acetyl-alpha-D-glucosamine 1-phosphate: step 1/1. Its pathway is bacterial outer membrane biogenesis; LPS lipid A biosynthesis. Functionally, catalyzes the last two sequential reactions in the de novo biosynthetic pathway for UDP-N-acetylglucosamine (UDP-GlcNAc). The C-terminal domain catalyzes the transfer of acetyl group from acetyl coenzyme A to glucosamine-1-phosphate (GlcN-1-P) to produce N-acetylglucosamine-1-phosphate (GlcNAc-1-P), which is converted into UDP-GlcNAc by the transfer of uridine 5-monophosphate (from uridine 5-triphosphate), a reaction catalyzed by the N-terminal domain. The polypeptide is Bifunctional protein GlmU (Dinoroseobacter shibae (strain DSM 16493 / NCIMB 14021 / DFL 12)).